The primary structure comprises 269 residues: Surfeit locus protein 4 (269 aa).

6 helical membrane passes run 64–84 (FLAS…CILV), 92–112 (YACF…SILW), 157–177 (MQLG…HFDM), 179–199 (FFYI…AIGF), 203–223 (LAAL…NAFW), and 242–262 (TMSV…GVSM). Residues 266-269 (KKEW) carry the Di-lysine motif motif.

The protein belongs to the SURF4 family.

Its subcellular location is the endoplasmic reticulum membrane. It localises to the endoplasmic reticulum-Golgi intermediate compartment membrane. The protein localises to the golgi apparatus membrane. Its function is as follows. Endoplasmic reticulum cargo receptor that mediates the export of lipoproteins by recruiting cargos into COPII vesicles to facilitate their secretion. Acts as a cargo receptor for lipoproteins bearing both APOB and APOA1, thereby regulating lipoprotein delivery and the maintenance of lipid homeostasis. This Gallus gallus (Chicken) protein is Surfeit locus protein 4.